The sequence spans 247 residues: MILFPAIDLKNGQCVRLEQGDMARATVFNLDPAAQAKSFADQGFDYLHVVDLDGAFAGKPMNAQAVEAMLKVVKMPVQLGGGIRDLKTVEAWLNKGITRVIIGTAAVRDPELVKTAAKAFPGRVAVGLDARDGKVAVEGWAETSEVTALDIAKRFEDAGVAAIIFTDIARDGLLKGLNLDATIALGDAVSIPVIASGGLASIEDVKAMLTPRARKLEGAIAGRALYDGRLDPAEALALIRAARKAGA.

Catalysis depends on D8, which acts as the Proton acceptor. The Proton donor role is filled by D129.

It belongs to the HisA/HisF family.

Its subcellular location is the cytoplasm. It carries out the reaction 1-(5-phospho-beta-D-ribosyl)-5-[(5-phospho-beta-D-ribosylamino)methylideneamino]imidazole-4-carboxamide = 5-[(5-phospho-1-deoxy-D-ribulos-1-ylimino)methylamino]-1-(5-phospho-beta-D-ribosyl)imidazole-4-carboxamide. It functions in the pathway amino-acid biosynthesis; L-histidine biosynthesis; L-histidine from 5-phospho-alpha-D-ribose 1-diphosphate: step 4/9. In Bradyrhizobium sp. (strain BTAi1 / ATCC BAA-1182), this protein is 1-(5-phosphoribosyl)-5-[(5-phosphoribosylamino)methylideneamino] imidazole-4-carboxamide isomerase.